Reading from the N-terminus, the 117-residue chain is Ig heavy chain V region 23 (117 aa).

The N-terminal stretch at 1-19 is a signal peptide; it reads MGWSCIILFLVAAANGVHS. Residues 20 to 49 form a framework-1 region; sequence QVQLQQPGTELVKPGASVKLSCKASGYTFT. Cys-41 and Cys-115 are joined by a disulfide. Residues 50-54 are complementarity-determining-1; the sequence is SYWMH. A framework-2 region spans residues 55-68; that stretch reads WVKQRPGQGLEWIG. The complementarity-determining-2 stretch occupies residues 69–85; that stretch reads NINPGNGGTNYNEKFKS. Positions 86–117 are framework-3; the sequence is KVTLTVDKSSSTAYTQLSSLTSEDSAVYYCAR.

The protein is Ig heavy chain V region 23 of Mus musculus (Mouse).